Here is a 350-residue protein sequence, read N- to C-terminus: Twinfilin-1 (350 aa).

Ser2 carries the N-acetylserine modification. In terms of domain architecture, ADF-H 1 spans 2–139; it reads SHQTGIQASE…SLHGYKKYLL (138 aa). Phosphoserine is present on residues Ser143 and Ser277. Residues 175-313 enclose the ADF-H 2 domain; the sequence is LQGVAFPISR…TADFLYDEVH (139 aa). The residue at position 309 (Tyr309) is a Phosphotyrosine. The interval 317–350 is disordered; it reads HAHKQSFAKPKGPAGKRGIRRLIRGPAEAEATTD. Thr349 is modified (phosphothreonine).

This sequence belongs to the actin-binding proteins ADF family. Twinfilin subfamily. As to quaternary structure, interacts with G-actin; ADP-actin form and capping protein (CP). May also be able to interact with TWF2 and phosphoinositides, PI(4,5)P2. When bound to PI(4,5)P2, it is down-regulated. Interacts with ACTG1. Post-translationally, phosphorylated on serine and threonine residues. Widely expressed with highest levels in brain, liver and kidney. Also expressed in heart, lung and testis. Not detected in spleen or skeletal muscle.

It is found in the cytoplasm. Its subcellular location is the cytoskeleton. In terms of biological role, actin-binding protein involved in motile and morphological processes. Inhibits actin polymerization, likely by sequestering G-actin. By capping the barbed ends of filaments, it also regulates motility. Seems to play an important role in clathrin-mediated endocytosis and distribution of endocytic organelles. The polypeptide is Twinfilin-1 (Twf1) (Mus musculus (Mouse)).